A 94-amino-acid chain; its full sequence is MKRVHVIVEGRVQGVGFRYFVQHEALKRQLTGWVKNNDDGTVEMEVQGNESALQLFLDTIEAGTMFAKVARMHIEPRDVRSDEKQFRIMYGSGF.

The Acylphosphatase-like domain maps to 3–90 (RVHVIVEGRV…SDEKQFRIMY (88 aa)). Catalysis depends on residues Arg18 and Asn36.

The protein belongs to the acylphosphatase family.

The enzyme catalyses an acyl phosphate + H2O = a carboxylate + phosphate + H(+). The chain is Acylphosphatase (acyP) from Geobacillus kaustophilus (strain HTA426).